The following is a 344-amino-acid chain: Holliday junction branch migration complex subunit RuvB (344 aa).

Residues 1–182 form a large ATPase domain (RuvB-L) region; the sequence is MSDRLISATA…FGIISRLEFY (182 aa). ATP-binding positions include Leu-21, Arg-22, Gly-63, Lys-66, Thr-67, Thr-68, 129-131, Arg-172, Tyr-182, and Arg-219; that span reads EDF. Residue Thr-67 coordinates Mg(2+). Positions 183-253 are small ATPAse domain (RuvB-S); sequence NNEDLTRIVT…VAAEALEFFE (71 aa). Positions 256 to 344 are head domain (RuvB-H); the sequence is PLGLDHTDRR…QKGLEQNSLF (89 aa). Positions 311 and 316 each coordinate DNA.

This sequence belongs to the RuvB family. Homohexamer. Forms an RuvA(8)-RuvB(12)-Holliday junction (HJ) complex. HJ DNA is sandwiched between 2 RuvA tetramers; dsDNA enters through RuvA and exits via RuvB. An RuvB hexamer assembles on each DNA strand where it exits the tetramer. Each RuvB hexamer is contacted by two RuvA subunits (via domain III) on 2 adjacent RuvB subunits; this complex drives branch migration. In the full resolvosome a probable DNA-RuvA(4)-RuvB(12)-RuvC(2) complex forms which resolves the HJ.

The protein resides in the cytoplasm. It catalyses the reaction ATP + H2O = ADP + phosphate + H(+). In terms of biological role, the RuvA-RuvB-RuvC complex processes Holliday junction (HJ) DNA during genetic recombination and DNA repair, while the RuvA-RuvB complex plays an important role in the rescue of blocked DNA replication forks via replication fork reversal (RFR). RuvA specifically binds to HJ cruciform DNA, conferring on it an open structure. The RuvB hexamer acts as an ATP-dependent pump, pulling dsDNA into and through the RuvAB complex. RuvB forms 2 homohexamers on either side of HJ DNA bound by 1 or 2 RuvA tetramers; 4 subunits per hexamer contact DNA at a time. Coordinated motions by a converter formed by DNA-disengaged RuvB subunits stimulates ATP hydrolysis and nucleotide exchange. Immobilization of the converter enables RuvB to convert the ATP-contained energy into a lever motion, pulling 2 nucleotides of DNA out of the RuvA tetramer per ATP hydrolyzed, thus driving DNA branch migration. The RuvB motors rotate together with the DNA substrate, which together with the progressing nucleotide cycle form the mechanistic basis for DNA recombination by continuous HJ branch migration. Branch migration allows RuvC to scan DNA until it finds its consensus sequence, where it cleaves and resolves cruciform DNA. The sequence is that of Holliday junction branch migration complex subunit RuvB from Desulforamulus reducens (strain ATCC BAA-1160 / DSM 100696 / MI-1) (Desulfotomaculum reducens).